The chain runs to 64 residues: Large ribosomal subunit protein uL30 (64 aa).

Positions 1-22 are disordered; the sequence is MSEQVKRVRVTQVGSPIGRKPG.

Belongs to the universal ribosomal protein uL30 family. In terms of assembly, part of the 50S ribosomal subunit.

The polypeptide is Large ribosomal subunit protein uL30 (Acidiphilium cryptum (strain JF-5)).